The following is a 311-amino-acid chain: Phosphoribosylaminoimidazole-succinocarboxamide synthase (311 aa).

This sequence belongs to the SAICAR synthetase family.

It carries out the reaction 5-amino-1-(5-phospho-D-ribosyl)imidazole-4-carboxylate + L-aspartate + ATP = (2S)-2-[5-amino-1-(5-phospho-beta-D-ribosyl)imidazole-4-carboxamido]succinate + ADP + phosphate + 2 H(+). The protein operates within purine metabolism; IMP biosynthesis via de novo pathway; 5-amino-1-(5-phospho-D-ribosyl)imidazole-4-carboxamide from 5-amino-1-(5-phospho-D-ribosyl)imidazole-4-carboxylate: step 1/2. In Aromatoleum aromaticum (strain DSM 19018 / LMG 30748 / EbN1) (Azoarcus sp. (strain EbN1)), this protein is Phosphoribosylaminoimidazole-succinocarboxamide synthase.